Reading from the N-terminus, the 217-residue chain is Methylthioribulose-1-phosphate dehydratase (217 aa).

Zn(2+) contacts are provided by histidine 106 and histidine 108.

Belongs to the aldolase class II family. MtnB subfamily. The cofactor is Zn(2+).

It catalyses the reaction 5-(methylsulfanyl)-D-ribulose 1-phosphate = 5-methylsulfanyl-2,3-dioxopentyl phosphate + H2O. It functions in the pathway amino-acid biosynthesis; L-methionine biosynthesis via salvage pathway; L-methionine from S-methyl-5-thio-alpha-D-ribose 1-phosphate: step 2/6. Its function is as follows. Catalyzes the dehydration of methylthioribulose-1-phosphate (MTRu-1-P) into 2,3-diketo-5-methylthiopentyl-1-phosphate (DK-MTP-1-P). The sequence is that of Methylthioribulose-1-phosphate dehydratase from Xanthomonas campestris pv. campestris (strain B100).